A 545-amino-acid chain; its full sequence is ATP synthase subunit alpha (545 aa).

173–180 (GDRQTGKT) lines the ATP pocket.

Belongs to the ATPase alpha/beta chains family. F-type ATPases have 2 components, CF(1) - the catalytic core - and CF(0) - the membrane proton channel. CF(1) has five subunits: alpha(3), beta(3), gamma(1), delta(1), epsilon(1). CF(0) has three main subunits: a(1), b(2) and c(9-12). The alpha and beta chains form an alternating ring which encloses part of the gamma chain. CF(1) is attached to CF(0) by a central stalk formed by the gamma and epsilon chains, while a peripheral stalk is formed by the delta and b chains.

It localises to the cell membrane. The catalysed reaction is ATP + H2O + 4 H(+)(in) = ADP + phosphate + 5 H(+)(out). Its function is as follows. Produces ATP from ADP in the presence of a proton gradient across the membrane. The alpha chain is a regulatory subunit. This is ATP synthase subunit alpha from Leifsonia xyli subsp. xyli (strain CTCB07).